A 160-amino-acid chain; its full sequence is S-adenosylmethionine decarboxylase proenzyme (160 aa).

Residue S73 is the Schiff-base intermediate with substrate; via pyruvic acid of the active site. S73 is modified (pyruvic acid (Ser); by autocatalysis). The active-site Proton acceptor; for processing activity is H78. Residue C93 is the Proton donor; for catalytic activity of the active site.

It belongs to the prokaryotic AdoMetDC family. Type 1 subfamily. As to quaternary structure, heterotetramer of two alpha and two beta chains arranged as a dimer of alpha/beta heterodimers. Requires pyruvate as cofactor. Is synthesized initially as an inactive proenzyme. Formation of the active enzyme involves a self-maturation process in which the active site pyruvoyl group is generated from an internal serine residue via an autocatalytic post-translational modification. Two non-identical subunits are generated from the proenzyme in this reaction, and the pyruvate is formed at the N-terminus of the alpha chain, which is derived from the carboxyl end of the proenzyme. The post-translation cleavage follows an unusual pathway, termed non-hydrolytic serinolysis, in which the side chain hydroxyl group of the serine supplies its oxygen atom to form the C-terminus of the beta chain, while the remainder of the serine residue undergoes an oxidative deamination to produce ammonia and the pyruvoyl group blocking the N-terminus of the alpha chain.

It catalyses the reaction S-adenosyl-L-methionine + H(+) = S-adenosyl 3-(methylsulfanyl)propylamine + CO2. It functions in the pathway amine and polyamine biosynthesis; S-adenosylmethioninamine biosynthesis; S-adenosylmethioninamine from S-adenosyl-L-methionine: step 1/1. Catalyzes the decarboxylation of S-adenosylmethionine to S-adenosylmethioninamine (dcAdoMet), the propylamine donor required for the synthesis of the polyamines spermine and spermidine from the diamine putrescine. The polypeptide is S-adenosylmethionine decarboxylase proenzyme (Pseudomonas aeruginosa (strain LESB58)).